The primary structure comprises 237 residues: Endonuclease V (237 aa).

Mg(2+) is bound by residues aspartate 46 and aspartate 114.

It belongs to the endonuclease V family. It depends on Mg(2+) as a cofactor.

It localises to the cytoplasm. The enzyme catalyses Endonucleolytic cleavage at apurinic or apyrimidinic sites to products with a 5'-phosphate.. Functionally, DNA repair enzyme involved in the repair of deaminated bases. Selectively cleaves double-stranded DNA at the second phosphodiester bond 3' to a deoxyinosine leaving behind the intact lesion on the nicked DNA. The sequence is that of Endonuclease V from Xanthomonas oryzae pv. oryzae (strain PXO99A).